Here is a 237-residue protein sequence, read N- to C-terminus: Sugar fermentation stimulation protein homolog (237 aa).

This sequence belongs to the SfsA family.

This is Sugar fermentation stimulation protein homolog from Synechocystis sp. (strain ATCC 27184 / PCC 6803 / Kazusa).